Here is an 87-residue protein sequence, read N- to C-terminus: NADH dehydrogenase [ubiquinone] 1 alpha subcomplex subunit 4-like 2 (87 aa).

This sequence belongs to the complex I NDUFA4 subunit family.

The chain is NADH dehydrogenase [ubiquinone] 1 alpha subcomplex subunit 4-like 2 (Ndufa4l2) from Mus musculus (Mouse).